The sequence spans 317 residues: Melanocyte-stimulating hormone receptor (317 aa).

The span at 1 to 20 shows a compositional bias: polar residues; the sequence is MPVQGSQRSLLGAVNSTPTA. The disordered stretch occupies residues 1–23; that stretch reads MPVQGSQRSLLGAVNSTPTATPH. The Extracellular portion of the chain corresponds to 1 to 37; the sequence is MPVQGSQRSLLGAVNSTPTATPHLRPAANQTGPQCLE. An N-linked (GlcNAc...) asparagine glycan is attached at asparagine 29. A helical membrane pass occupies residues 38–63; that stretch reads VSIPDGLFLCLGLVSLVENTLVVAAI. Residues 64 to 72 lie on the Cytoplasmic side of the membrane; the sequence is AKNRNLHSP. Residues 73–93 traverse the membrane as a helical segment; sequence MYCFICCLALSDLLVSVSSVL. Residues 94–118 lie on the Extracellular side of the membrane; that stretch reads ETAVLLLLGAGALAAQATVVQQLGN. The helical transmembrane segment at 119 to 140 threads the bilayer; that stretch reads VIDVLLCSSMVSSLFFLGAIAM. Topologically, residues 141-163 are cytoplasmic; that stretch reads DRYISIFYALRYHSIVTLARARR. A helical membrane pass occupies residues 164–183; it reads AIAAIWAASILSSTLFIAYC. The Extracellular portion of the chain corresponds to 184–191; that stretch reads DRTAALLC. The helical transmembrane segment at 192–211 threads the bilayer; it reads LVVFFLAMLVLMAVLYVHML. The Cytoplasmic segment spans residues 212 to 240; sequence TQARQHAQGIARLHKRQRPVQQGWGLKGA. Residues 241 to 266 traverse the membrane as a helical segment; it reads ATLTILLGVFFLCWGPFFLHLTLIAV. Residues 267–279 lie on the Extracellular side of the membrane; sequence CPQHPTCSCIFKN. Residues 280 to 300 form a helical membrane-spanning segment; the sequence is FRLFLALIVCNAIVDPLIYAF. Topologically, residues 301-317 are cytoplasmic; the sequence is RSQELRKTLKEVLLFFW.

This sequence belongs to the G-protein coupled receptor 1 family. As to quaternary structure, interacts with MGRN1, but does not undergo MGRN1-mediated ubiquitination; this interaction competes with GNAS-binding and thus inhibits agonist-induced cAMP production. Interacts with OPN3; the interaction results in a decrease in MC1R-mediated cAMP signaling and ultimately a decrease in melanin production in melanocytes.

It localises to the cell membrane. Its function is as follows. Receptor for MSH (alpha, beta and gamma) and ACTH. The activity of this receptor is mediated by G proteins which activate adenylate cyclase. Mediates melanogenesis, the production of eumelanin (black/brown) and phaeomelanin (red/yellow), via regulation of cAMP signaling in melanocytes. This is Melanocyte-stimulating hormone receptor (MC1R) from Lemur catta (Ring-tailed lemur).